The following is a 590-amino-acid chain: Acetylcholinesterase (590 aa).

The signal sequence occupies residues 1–24 (MREMNLLVTSSLGVLLHLVVLCQA). N83 is a glycosylation site (N-linked (GlcNAc...) asparagine). An intrachain disulfide couples C91 to C118. The active-site Acyl-ester intermediate is the S224. A disulfide bridge links C278 with C289. E351 serves as the catalytic Charge relay system. Cysteines 426 and 545 form a disulfide. N440 is a glycosylation site (N-linked (GlcNAc...) asparagine). H464 acts as the Charge relay system in catalysis. N-linked (GlcNAc...) asparagine glycosylation is found at N481 and N557. A lipid anchor (GPI-anchor amidated serine) is attached at S567. The propeptide at 568-590 (SGTSSSKGIIFYVLFSILYLIFY) is removed in mature form.

The protein belongs to the type-B carboxylesterase/lipase family. Isoform H form is a homodimer; the asymmetric form is a disulfide-bonded oligomer composed of a collagenic subunit (Q) and a variable number of T catalytic subunits. An interchain disulfide bond is present in what becomes position 596 of the T isoform. As to expression, found in the synapses and to a lower extent in extrajunctional areas of muscle and nerve, and on erythrocyte membranes.

Its subcellular location is the cell membrane. The protein localises to the synapse. The enzyme catalyses acetylcholine + H2O = choline + acetate + H(+). Terminates signal transduction at the neuromuscular junction by rapid hydrolysis of the acetylcholine released into the synaptic cleft. May be involved in cell-cell interactions. The chain is Acetylcholinesterase (ache) from Torpedo marmorata (Marbled electric ray).